The primary structure comprises 252 residues: Aliphatic sulfonates import ATP-binding protein SsuB 1 (252 aa).

Positions 6–234 (LQLHIAGKRF…PRDRQAHEAA (229 aa)) constitute an ABC transporter domain. 38–45 (GASGCGKS) lines the ATP pocket.

It belongs to the ABC transporter superfamily. Aliphatic sulfonates importer (TC 3.A.1.17.2) family. The complex is composed of two ATP-binding proteins (SsuB), two transmembrane proteins (SsuC) and a solute-binding protein (SsuA).

Its subcellular location is the cell inner membrane. It catalyses the reaction ATP + H2O + aliphatic sulfonate-[sulfonate-binding protein]Side 1 = ADP + phosphate + aliphatic sulfonateSide 2 + [sulfonate-binding protein]Side 1.. Functionally, part of the ABC transporter complex SsuABC involved in aliphatic sulfonates import. Responsible for energy coupling to the transport system. The polypeptide is Aliphatic sulfonates import ATP-binding protein SsuB 1 (Xanthomonas axonopodis pv. citri (strain 306)).